An 85-amino-acid chain; its full sequence is ATP synthase subunit c (85 aa).

2 consecutive transmembrane segments (helical) span residues 19–39 (LGAA…IGKI) and 62–82 (IIAA…CLLV).

Belongs to the ATPase C chain family. In terms of assembly, F-type ATPases have 2 components, F(1) - the catalytic core - and F(0) - the membrane proton channel. F(1) has five subunits: alpha(3), beta(3), gamma(1), delta(1), epsilon(1). F(0) has three main subunits: a(1), b(2) and c(10-14). The alpha and beta chains form an alternating ring which encloses part of the gamma chain. F(1) is attached to F(0) by a central stalk formed by the gamma and epsilon chains, while a peripheral stalk is formed by the delta and b chains.

Its subcellular location is the cell inner membrane. In terms of biological role, f(1)F(0) ATP synthase produces ATP from ADP in the presence of a proton or sodium gradient. F-type ATPases consist of two structural domains, F(1) containing the extramembraneous catalytic core and F(0) containing the membrane proton channel, linked together by a central stalk and a peripheral stalk. During catalysis, ATP synthesis in the catalytic domain of F(1) is coupled via a rotary mechanism of the central stalk subunits to proton translocation. Functionally, key component of the F(0) channel; it plays a direct role in translocation across the membrane. A homomeric c-ring of between 10-14 subunits forms the central stalk rotor element with the F(1) delta and epsilon subunits. The chain is ATP synthase subunit c from Bacteroides fragilis (strain ATCC 25285 / DSM 2151 / CCUG 4856 / JCM 11019 / LMG 10263 / NCTC 9343 / Onslow / VPI 2553 / EN-2).